The following is a 363-amino-acid chain: AA9 family lytic polysaccharide monooxygenase I (363 aa).

Residues 1–19 (MSLFKFAAFVLGTAGSVAG) form the signal peptide. Cu(2+) contacts are provided by histidine 20 and histidine 105. 2 disulfides stabilise this stretch: cysteine 75–cysteine 197 and cysteine 116–cysteine 120. O2 is bound by residues histidine 183 and glutamine 192. Tyrosine 194 contacts Cu(2+). Polar residues predominate over residues 248–257 (GSDSNTATSG). 2 disordered regions span residues 248-270 (GSDSNTATSGASPPSTNFSPTTT) and 298-363 (SVSY…RTQS). Positions 258 to 270 (ASPPSTNFSPTTT) are enriched in low complexity. Positions 298–307 (SVSYSQTPWP) are enriched in polar residues. The segment covering 308–329 (SSTATEATSASSSAGGSNNGHT) has biased composition (low complexity). Positions 342–354 (TGKKRSRLNRRRM) are enriched in basic residues.

Belongs to the polysaccharide monooxygenase AA9 family. It depends on Cu(2+) as a cofactor.

It is found in the secreted. The catalysed reaction is [(1-&gt;4)-beta-D-glucosyl]n+m + reduced acceptor + O2 = 4-dehydro-beta-D-glucosyl-[(1-&gt;4)-beta-D-glucosyl]n-1 + [(1-&gt;4)-beta-D-glucosyl]m + acceptor + H2O.. Functionally, lytic polysaccharide monooxygenase (LPMO) that depolymerizes crystalline and amorphous polysaccharides via the oxidation of scissile alpha- or beta-(1-4)-glycosidic bonds, yielding C1 or C4 oxidation products. Catalysis by LPMOs requires the reduction of the active-site copper from Cu(II) to Cu(I) by a reducing agent and H(2)O(2) or O(2) as a cosubstrate. The sequence is that of AA9 family lytic polysaccharide monooxygenase I from Emericella nidulans (strain FGSC A4 / ATCC 38163 / CBS 112.46 / NRRL 194 / M139) (Aspergillus nidulans).